Consider the following 414-residue polypeptide: Serine/threonine transporter SstT (414 aa).

9 helical membrane-spanning segments follow: residues 19-39, 55-75, 89-109, 148-168, 189-209, 223-243, 297-317, 323-343, and 363-383; these read IIVG…LEPV, FVKG…IAAI, IVML…LASF, ALAT…GIAL, IVHL…AATL, LLLV…PFIV, IPLG…VLTL, LGIP…AVCA, and LFGI…VIGV.

It belongs to the dicarboxylate/amino acid:cation symporter (DAACS) (TC 2.A.23) family.

Its subcellular location is the cell inner membrane. It catalyses the reaction L-serine(in) + Na(+)(in) = L-serine(out) + Na(+)(out). It carries out the reaction L-threonine(in) + Na(+)(in) = L-threonine(out) + Na(+)(out). Its function is as follows. Involved in the import of serine and threonine into the cell, with the concomitant import of sodium (symport system). The polypeptide is Serine/threonine transporter SstT (Actinobacillus succinogenes (strain ATCC 55618 / DSM 22257 / CCUG 43843 / 130Z)).